Reading from the N-terminus, the 141-residue chain is Drosulfakinins (141 aa).

Positions 1 to 31 (MGLRSCTHLATLFMTLWAVAFCFLVVVPIPA) are cleaved as a signal peptide. Residues 32–73 (QTTSLQNAKDDRRLQELESKIGAESDQTNANLVGPSFSRFGD) constitute a propeptide that is removed on maturation. A Phenylalanine amide modification is found at phenylalanine 82. Residues 86–111 (VPLISRPMIPIELDLLMDNDDERTKA) constitute a propeptide that is removed on maturation. Tyrosine 117 is subject to Sulfotyrosine. Phenylalanine 122 is modified (phenylalanine amide). Tyrosine 134 is modified (sulfotyrosine). A Phenylalanine amide modification is found at phenylalanine 139.

It belongs to the gastrin/cholecystokinin family.

Its subcellular location is the secreted. Its function is as follows. Drosulfakinin-0 (DSK 0) plays diverse biological roles including regulating gut muscle contraction in adults but not in larvae. The polypeptide is Drosulfakinins (Drosophila simulans (Fruit fly)).